A 73-amino-acid chain; its full sequence is Large ribosomal subunit protein uL24 (73 aa).

Positions 51-65 (DDNPKGGFIHKEKPM) are enriched in basic and acidic residues. Positions 51 to 73 (DDNPKGGFIHKEKPMHISNVKKA) are disordered.

The protein belongs to the universal ribosomal protein uL24 family. Part of the 50S ribosomal subunit.

One of two assembly initiator proteins, it binds directly to the 5'-end of the 23S rRNA, where it nucleates assembly of the 50S subunit. In terms of biological role, one of the proteins that surrounds the polypeptide exit tunnel on the outside of the subunit. This is Large ribosomal subunit protein uL24 from Helicobacter acinonychis (strain Sheeba).